Reading from the N-terminus, the 435-residue chain is Diguanylate cyclase TpbB (435 aa).

The Cytoplasmic portion of the chain corresponds to 1-22 (MNRRRRYTGSNPSLRRVLYRAH). Residues 23–43 (LGVALVAVFTAGLAVTLVGLL) traverse the membrane as a helical segment. Residues 44–154 (TLRAYADPNQ…VKGSGGSLLR (111 aa)) are Periplasmic-facing. Residues 155–175 (FLLTGFAGMVLCLLLTALGAF) traverse the membrane as a helical segment. Over 176–435 (YLSRRLVRGI…DSATPEAPPK (260 aa)) the chain is Cytoplasmic. The HAMP domain occupies 183–236 (RGIVGPLDQLAKVAHTVRRERDFEKRVPEAGIAELSQLGEDFNALLDELESWQA). The 137-residue stretch at 279-415 (EQLAVLFIDS…GSRRLAELND (137 aa)) folds into the GGDEF domain. 2 residues coordinate Mg(2+): Ser288 and Asp330. Asp330 serves as the catalytic Proton acceptor. Residues 413-426 (LNDPRILQEEKEID) show a composition bias toward basic and acidic residues. The disordered stretch occupies residues 413-435 (LNDPRILQEEKEIDSATPEAPPK).

As to quaternary structure, homodimer. Interacts with YfiR. Mg(2+) serves as cofactor. In terms of processing, phosphorylated at both Tyr residues and Ser/Thr residues. Dephosphorylated and inactivated by TpbA.

It is found in the cell inner membrane. It catalyses the reaction 2 GTP = 3',3'-c-di-GMP + 2 diphosphate. Its pathway is purine metabolism; 3',5'-cyclic di-GMP biosynthesis. With respect to regulation, activity is tightly controlled by YfiR, a small periplasmic protein, and the OmpA/Pal-like outer-membrane lipoprotein YfiB. Diguanylate cyclase activity is inhibited by the specific interaction of YfiR with the TpbB periplasmic domain and is activated by YfiB, which releases the YfiR-mediated repression through sequestration of YfiR to the outer membrane. Release of repression leads to a conformational shift in TpbB/YfiN that propagates through the PAS and transmembrane domains to switch the cytoplasmic HAMP domain from an inactive to an active conformation and activate the C-terminal catalytic GGDEF domain. Thus, TpbB/YfiN appears to function by switching between discrete inactive and active functional states depending on the presence or absence of bound YfiR. Activity is also controlled by dephosphorylation of the periplasmic domain by the tyrosine phosphatase TpbA. These two mechanisms of regulation could in principle work in parallel or as part of the same regulatory pathway. Does not undergo product feedback inhibition. In terms of biological role, catalyzes the synthesis of cyclic-di-GMP (c-di-GMP) via the condensation of 2 GTP molecules. Part of the YfiB-TpbB-YfiR (or yfiBNR) system, encoding a tripartite signaling module that modulates intracellular c-di-GMP levels. The system is a key regulator of the small colony variant (SCV) phenotype, and plays an important role in biofilm formation and in vivo persistence. The c-di-GMP produced by TpbB/YfiN stimulates the production of the Pel and Psl exopolysaccharides, which promotes surface attachment, generates an SCV phenotype and confers resistance against phagocytosis. This Pseudomonas aeruginosa (strain ATCC 15692 / DSM 22644 / CIP 104116 / JCM 14847 / LMG 12228 / 1C / PRS 101 / PAO1) protein is Diguanylate cyclase TpbB.